The primary structure comprises 355 residues: Protein FIP1 (355 aa).

4 consecutive transmembrane segments (helical) span residues 42-62 (YLYMLLLAGYAILAAGAPWMF), 72-92 (LLCCCDVALLVVTGVFQQYFV), 113-133 (VVRLPFAIAAYGTAAMLLVIV), and 149-169 (IIMLVEAVGAGFFMGLYIGYV). Residues 220–337 (LHFLSEEILC…RMSNSELQKE (118 aa)) are a coiled coil. A compositionally biased stretch (basic and acidic residues) spans 331 to 340 (NSELQKEVAS). The interval 331–355 (NSELQKEVASTRRKQMLETTTSEQP) is disordered.

Belongs to the TMEM192 family. In terms of assembly, interacts with FRI.

Its subcellular location is the membrane. This chain is Protein FIP1, found in Arabidopsis thaliana (Mouse-ear cress).